A 38-amino-acid chain; its full sequence is Toxin BmK NSPK (38 aa).

3 cysteine pairs are disulfide-bonded: Cys-7-Cys-27, Cys-13-Cys-32, and Cys-17-Cys-34.

As to expression, expressed by the venom gland.

Its subcellular location is the secreted. Its function is as follows. Blocks voltage-gated potassium (Kv) channel and augments neurite extension via NGF/TrkA signaling pathway. The sequence is that of Toxin BmK NSPK from Olivierus martensii (Manchurian scorpion).